The sequence spans 58 residues: MATVKVTLIKSVSGRIPNHKLCVKGLGLRRIGHTVEVQDTPENRGMINKAYYMLRVEG.

The protein belongs to the universal ribosomal protein uL30 family. As to quaternary structure, part of the 50S ribosomal subunit.

The chain is Large ribosomal subunit protein uL30 from Pseudomonas putida (strain W619).